A 373-amino-acid chain; its full sequence is 3 beta-hydroxysteroid dehydrogenase/Delta 5--&gt;4-isomerase type 6 (373 aa).

Tyr-155 serves as the catalytic Proton acceptor. Lys-159 contributes to the NAD(+) binding site. Residues 288-308 (VPLLYWLAFMLETVSFLLSPI) form a helical membrane-spanning segment.

This sequence belongs to the 3-beta-HSD family. Expressed in skin and testis.

The protein localises to the endoplasmic reticulum membrane. It is found in the mitochondrion membrane. The enzyme catalyses a 3beta-hydroxy-Delta(5)-steroid + NAD(+) = a 3-oxo-Delta(5)-steroid + NADH + H(+). It carries out the reaction a 3-oxo-Delta(5)-steroid = a 3-oxo-Delta(4)-steroid. The protein operates within lipid metabolism; steroid biosynthesis. In terms of biological role, 3-beta-HSD is a bifunctional enzyme, that catalyzes the oxidative conversion of Delta(5)-ene-3-beta-hydroxy steroid, and the oxidative conversion of ketosteroids. The 3-beta-HSD enzymatic system plays a crucial role in the biosynthesis of all classes of hormonal steroids. May be involved in local production of progesterone. This Mus musculus (Mouse) protein is 3 beta-hydroxysteroid dehydrogenase/Delta 5--&gt;4-isomerase type 6 (Hsd3b6).